A 253-amino-acid chain; its full sequence is MSNLLEKFKNKSKSLFFIPFFVSGFPSFDFLEVFLLKNKDKIDILELGVPFSDPVADGPVLQEINYRAMVRGVNLNSTLDWLVRSGVSRNIDVILLLYFNLIQNKLEENLKRFKDTEIKGLVIPDLPMEEAETLIPLFNKYNLDLILFISPTTRDERMKKILKMAPSFLYCISVKGVTGERDKLPEEGVSFISRIKKETDKPLVWGFGLSNSSQIAALKGLVDGVIVGSAIGKRLLNNEDIQEYFDELYRATL.

Residues Glu-46 and Asp-57 each act as proton acceptor in the active site.

The protein belongs to the TrpA family. Tetramer of two alpha and two beta chains.

The catalysed reaction is (1S,2R)-1-C-(indol-3-yl)glycerol 3-phosphate + L-serine = D-glyceraldehyde 3-phosphate + L-tryptophan + H2O. It participates in amino-acid biosynthesis; L-tryptophan biosynthesis; L-tryptophan from chorismate: step 5/5. The alpha subunit is responsible for the aldol cleavage of indoleglycerol phosphate to indole and glyceraldehyde 3-phosphate. This is Tryptophan synthase alpha chain from Dictyoglomus turgidum (strain DSM 6724 / Z-1310).